A 644-amino-acid polypeptide reads, in one-letter code: MRLSELTHPNQLHGLSIAELEDVARQIRERHLEVVSTSGGHLGPGLGVVELTLALYQTLDLDHDRVVWDVGHQAYPHKLITGRYGDFNTLRQQGGVAGYLKRCESSFDHFGAGHASTSISAALGMAVARERRGESFKCVAVIGDGALTGGIALEAINHAGHMPNTPFLVVLNDNDMSISPPVGALSTHLNRMRHSAPVQFISDSVEERVKSLPFMGGELPAELDLLKGSMRRLSVPKVGAVFEELGFTYMGPIDGHDIERMVRTFETAHKVGGPVLVHVVTTKGKGYPYAEADQVGYHAQSAFDLITGKALPSKGKKPPSYSKVFGETLIKLCQQDSTVVGITAAMATGTGLDLLQKAVPEQYIDVGIAEQHAVTLAAGMACEGLKPVLAIYSTFLQRAFDQLIHDVGIQNLPVTFVMDRAGIVGADGPTHQGQYDISYFRAIPNFTVMAPKDEAELQRMLVTCLQHQGPAALRIPRGSGEGVPLLDEGWEPLAIGRGEVLCEGDDLLIVAYGVMVPAAMITAQLLQEAGVKATVINARFLRPLDQALIHPLARRIGRVVTMEEGALAGGFGAAVVESLSDQDVLVPTFRIGIPDQLVDHASPQQSREALGLTPTQMSERIQEHFCLNSQPSLVGQEAPQALST.

Thiamine diphosphate is bound by residues histidine 72 and 113–115 (GHA). Aspartate 144 lines the Mg(2+) pocket. Residues 145 to 146 (GA), asparagine 174, tyrosine 287, and glutamate 370 each bind thiamine diphosphate. Asparagine 174 is a Mg(2+) binding site.

The protein belongs to the transketolase family. DXPS subfamily. In terms of assembly, homodimer. Mg(2+) is required as a cofactor. The cofactor is thiamine diphosphate.

It catalyses the reaction D-glyceraldehyde 3-phosphate + pyruvate + H(+) = 1-deoxy-D-xylulose 5-phosphate + CO2. Its pathway is metabolic intermediate biosynthesis; 1-deoxy-D-xylulose 5-phosphate biosynthesis; 1-deoxy-D-xylulose 5-phosphate from D-glyceraldehyde 3-phosphate and pyruvate: step 1/1. In terms of biological role, catalyzes the acyloin condensation reaction between C atoms 2 and 3 of pyruvate and glyceraldehyde 3-phosphate to yield 1-deoxy-D-xylulose-5-phosphate (DXP). The polypeptide is 1-deoxy-D-xylulose-5-phosphate synthase (Prochlorococcus marinus (strain MIT 9303)).